Reading from the N-terminus, the 1712-residue chain is MGQTITTPLSLTLDHWSEVRARAHNQGVEVRKKKWITLCEAEWVMMNVGWPREGTFSLDNISQVEKKIFAPGPYGHPDQVPYITTWRSLATDPPSWVRPFLPPPKPPTPLPQPLSPQPSAPLTSSLYPVLPKSDPPKPPVLPPDPSSPLIDLLTEEPPPYPGGHGPPPSGPRTPTASPIASRLRERRENPAEESQALPLREGPNNRPQYWPFSASDLYNWKSHNPPFSQDPVALTNLIESILVTHQPTWDDCQQLLQALLTGEERQRVLLEARKQVPGEDGRPTQLPNVIDETFPLTRPNWDFATPAGREHLRLYRQLLLAGLRGAARRPTNLAQVKQVVQGKEETPAAFLERLKEAYRMYTPYDPEDPGQAASVILSFIYQSSPDIRNKLQRLEGLQGFTLSDLLKEAEKIYNKRETPEEREERLWQRQEERDKKRHKEMTKVLATVVAQNRDKDREESKLGDQRKIPLGKDQCAYCKEKGHWVRDCPKRPRKKPANSTLLNLGDQESQGQDPPPEPRITLKIGGQPVTFLVDTGAQHSVLTRPDGPLSDRTALVQGATGSKNYRWTTDRRVQLATGKVTHSFLYVPECPYPLLGRDLLTKLKAQIHFTGEGANVVGPKGLPLQVLTLQLEEEYRLFEPESTQKQEMDIWLKNFPQAWAETGGMGTAHCQAPVLIQLKATATPISIRQYPMPHEAYQGIKPHIRRMLDQGILKPCQSPWNTPLLPVKKPGTEDYRPVQDLREVNKRVEDIHPTVPNPYNLLSTLPPSHPWYTVLDLKDAFFCLRLHSESQLLFAFEWRDPEIGLSGQLTWTRLPQGFKNSPTLFDEALHSDLADFRVRYPALVLLQYVDDLLLAAATRTECLEGTKALLETLGNKGYRASAKKAQICLQEVTYLGYSLKDGQRWLTKARKEAILSIPVPKNSRQVREFLGTAGYCRLWIPGFAELAAPLYPLTRPGTLFQWGTEQQLAFEDIKKALLSSPALGLPDITKPFELFIDENSGFAKGVLVQKLGPWKRPVAYLSKKLDTVASGWPPCLRMVAAIAILVKDAGKLTLGQPLTILTSHPVEALVRQPPNKWLSNARMTHYQAMLLDAERVHFGPTVSLNPATLLPLPSGGNHHDCLQILAETHGTRPDLTDQPLPDADLTWYTDGSSFIRNGEREAGAAVTTESEVIWAAPLPPGTSAQRAELIALTQALKMAEGKKLTVYTDSRYAFATTHVHGEIYRRRGLLTSEGKEIKNKNEILALLEALFLPKRLSIIHCPGHQKGDSPQAKGNRLADDTAKKAATETHSSLTVLPTELIEGPKRPPWEYDDSDLDLVQKLEAHYEPKRGTWEYRGKTIMPEKYAKELISHLHKLTHLSARKMKTLLEREETGFYLPNRDLHLRQVTESCRACAQINAGKIKFGPDVRARGRRPGTHWEVDFTEIKPGMYGYKYLLVFIDTFSGWAEAYPAKHETAKVVAKKLLEEIFPRYGIPQVLGSDNGPAFISQVSQSVATLLGINWKLHCAYRPQSSGQVERMNRSIKETLTKLTLETGSKDWVLLLPLVLYRVRNTPGPHGLTPFEILYGAPPPMAHFFDTDISSFATSPTMQAHLRALQLVQEEIQRPLAAAYREKLETPVVPHPFKPGDSVWVRRHQTKNLEPRWKGPHIVLLTTPTALKVDGVAAWIHASHVKAAGPTTNQDLSDSPSSDDPSRWKVQRTQNPLKIRLSRGT.

A lipid anchor (N-myristoyl glycine; by host) is attached at glycine 2. Disordered stretches follow at residues valine 97–glutamine 208, arginine 416–glutamate 440, and aspartate 487–proline 518. The span at phenylalanine 100–serine 119 shows a compositional bias: pro residues. The PTAP/PSAP motif motif lies at proline 107 to leucine 110. Over residues alanine 120–lysine 132 the composition is skewed to low complexity. The LYPX(n)L motif motif lies at leucine 126–leucine 130. Composition is skewed to pro residues over residues proline 136–serine 146 and glutamate 156–proline 171. The short motif at proline 157–tyrosine 160 is the PPXY motif element. The segment covering arginine 416–aspartate 434 has biased composition (basic and acidic residues). The segment at aspartate 473 to lysine 490 adopts a CCHC-type zinc-finger fold. Residues alanine 497–glutamine 512 are compositionally biased toward polar residues. The 71-residue stretch at valine 529–leucine 599 folds into the Peptidase A2 domain. The Protease; shared with dimeric partner role is filled by aspartate 534. Residues leucine 708 to leucine 899 form the Reverse transcriptase domain. Positions 776, 850, 851, 1150, 1188, 1209, and 1279 each coordinate Mg(2+). An RNase H type-1 domain is found at proline 1141–threonine 1287. Residues proline 1262–threonine 1289 form a disordered region. Basic and acidic residues predominate over residues arginine 1276–threonine 1287. Residues histidine 1354–cysteine 1394 form an HHCC-type zinc finger. An Integrase catalytic domain is found at arginine 1411–proline 1569. Residues aspartate 1422 and aspartate 1481 each coordinate Mg(2+). The tract at residues glycine 1676–proline 1703 is disordered.

It belongs to the retroviral Pol polyprotein family. In terms of assembly, homohexamer; further associates as homomultimer. The virus core is composed of a lattice formed from hexagonal rings, each containing six capsid monomers. As to quaternary structure, interacts (via PPXY motif) with host NEDD4. Interacts (via PSAP motif) with host TSG101. Interacts (via LYPX(n)L motif) with host PDCD6IP. The reverse transcriptase is a monomer (Potential). Interacts (via RNase domains) with host release factor ETF1; this interaction is essential for translational readthrough of amber codon between viral gag and pol genes, as well as for viral replication. In terms of assembly, homodimer. The cofactor is Mg(2+). Post-translationally, specific enzymatic cleavages by the viral protease yield mature proteins. The protease is released by autocatalytic cleavage. The polyprotein is cleaved during and after budding, this process is termed maturation. In terms of processing, phosphorylated on serine residues.

Its subcellular location is the virion. The protein localises to the host cell membrane. The protein resides in the host late endosome membrane. It is found in the host endosome. It localises to the host multivesicular body. Its subcellular location is the host cytoplasm. The catalysed reaction is DNA(n) + a 2'-deoxyribonucleoside 5'-triphosphate = DNA(n+1) + diphosphate. The enzyme catalyses Endonucleolytic cleavage to 5'-phosphomonoester.. Its activity is regulated as follows. Most efficiently inhibited by Amprenavir, which is able to block Gag-Pol processing in infected cells. In terms of biological role, plays a role in budding and is processed by the viral protease during virion maturation outside the cell. During budding, it recruits, in a PPXY-dependent or independent manner, Nedd4-like ubiquitin ligases that conjugate ubiquitin molecules to Gag-Pol, or to Gag-Pol binding host factors. Interaction with HECT ubiquitin ligases probably links the viral protein to the host ESCRT pathway and facilitates release. Targets Gag and gag-pol polyproteins to the plasma membrane via a multipartite membrane binding signal, that includes its myristoylated N-terminus. Also mediates nuclear localization of the pre-integration complex. Its function is as follows. Constituent of the pre-integration complex (PIC) which tethers the latter to mitotic chromosomes. This allows the integration of the viral genome into the host DNA. Functionally, forms the spherical core of the virion that encapsulates the genomic RNA-nucleocapsid complex. In terms of biological role, involved in the packaging and encapsidation of two copies of the genome. Binds with high affinity to conserved UCUG elements within the packaging signal, located near the 5'-end of the genome. This binding is dependent on genome dimerization. Acts as a nucleic acid chaperone which is involved in rearrangement of nucleic acid secondary structures during gRNA retrotranscription. The aspartyl protease mediates proteolytic cleavages of Gag and Gag-Pol polyproteins during or shortly after the release of the virion from the plasma membrane. Cleavages take place as an ordered, step-wise cascade to yield mature proteins. This process is called maturation. Displays maximal activity during the budding process just prior to particle release from the cell. Its function is as follows. RT is a multifunctional enzyme that converts the viral dimeric RNA genome into dsDNA in the cytoplasm, shortly after virus entry into the cell. This enzyme displays a DNA polymerase activity that can copy either DNA or RNA templates, and a ribonuclease H (RNase H) activity that cleaves the RNA strand of RNA-DNA heteroduplexes in a partially processive 3' to 5' endonucleasic mode. Conversion of viral genomic RNA into dsDNA requires many steps. A tRNA binds to the primer-binding site (PBS) situated at the 5' end of the viral RNA. RT uses the 3' end of the tRNA primer to perform a short round of RNA-dependent minus-strand DNA synthesis. The reading proceeds through the U5 region and ends after the repeated (R) region which is present at both ends of viral RNA. The portion of the RNA-DNA heteroduplex is digested by the RNase H, resulting in a ssDNA product attached to the tRNA primer. This ssDNA/tRNA hybridizes with the identical R region situated at the 3' end of viral RNA. This template exchange, known as minus-strand DNA strong stop transfer, can be either intra- or intermolecular. RT uses the 3' end of this newly synthesized short ssDNA to perform the RNA-dependent minus-strand DNA synthesis of the whole template. RNase H digests the RNA template except for a polypurine tract (PPT) situated at the 5' end of the genome. It is not clear if both polymerase and RNase H activities are simultaneous. RNase H probably can proceed both in a polymerase-dependent (RNA cut into small fragments by the same RT performing DNA synthesis) and a polymerase-independent mode (cleavage of remaining RNA fragments by free RTs). Secondly, RT performs DNA-directed plus-strand DNA synthesis using the PPT that has not been removed by RNase H as primers. PPT and tRNA primers are then removed by RNase H. The 3' and 5' ssDNA PBS regions hybridize to form a circular dsDNA intermediate. Strand displacement synthesis by RT to the PBS and PPT ends produces a blunt ended, linear dsDNA copy of the viral genome that includes long terminal repeats (LTRs) at both ends. Functionally, catalyzes viral DNA integration into the host chromosome, by performing a series of DNA cutting and joining reactions. This enzyme activity takes place after virion entry into a cell and reverse transcription of the RNA genome in dsDNA. The first step in the integration process is 3' processing. This step requires a complex comprising the viral genome, matrix protein and integrase. This complex is called the pre-integration complex (PIC). The integrase protein removes 2 nucleotides from each 3' end of the viral DNA, leaving recessed CA OH's at the 3' ends. In the second step that requires cell division, the PIC enters cell nucleus. In the third step, termed strand transfer, the integrase protein joins the previously processed 3' ends to the 5' ends of strands of target cellular DNA at the site of integration. The last step is viral DNA integration into host chromosome. The chain is Gag-Pol polyprotein (pol) from Feline leukemia virus.